Consider the following 142-residue polypeptide: Transcriptional regulator MraZ (142 aa).

SpoVT-AbrB domains are found at residues Glu5 to Glu47 and Ala76 to Lys119.

This sequence belongs to the MraZ family. In terms of assembly, forms oligomers.

The protein resides in the cytoplasm. It localises to the nucleoid. The protein is Transcriptional regulator MraZ of Clostridium botulinum (strain Eklund 17B / Type B).